Here is a 209-residue protein sequence, read N- to C-terminus: MRQHVNPLSSNFNKIERIPSLSEMFGDSKLNLHLDIGCAAGEFLFNLASVNTSWNYLGIEIREKLVKNAKLKVFEREIKNLYFVFGNANNILNDVQSKYIIRNIKSISFNFPDPWFKKRHYKRRVIQPEFINVLSNQLQKGTLIFIKTDVKELFDYMDRTISSNFYFKKIDKKDFNYSESFNPNKVKTNRENYVIVNQINIFERIYMRI.

4 residues coordinate S-adenosyl-L-methionine: aspartate 35, glutamate 60, asparagine 87, and aspartate 113. Residue aspartate 113 is part of the active site. Substrate-binding residues include lysine 117 and aspartate 149.

This sequence belongs to the class I-like SAM-binding methyltransferase superfamily. TrmB family.

It carries out the reaction guanosine(46) in tRNA + S-adenosyl-L-methionine = N(7)-methylguanosine(46) in tRNA + S-adenosyl-L-homocysteine. It functions in the pathway tRNA modification; N(7)-methylguanine-tRNA biosynthesis. Its function is as follows. Catalyzes the formation of N(7)-methylguanine at position 46 (m7G46) in tRNA. The chain is tRNA (guanine-N(7)-)-methyltransferase from Prochlorococcus marinus (strain MIT 9215).